The sequence spans 81 residues: Large ribosomal subunit protein bL27 (81 aa).

Residues 1 to 11 (MATSKSGGSSK) are compositionally biased toward polar residues. Positions 1-24 (MATSKSGGSSKNGRDSISKRLGVK) are disordered.

It belongs to the bacterial ribosomal protein bL27 family.

This Borrelia duttonii (strain Ly) protein is Large ribosomal subunit protein bL27.